The primary structure comprises 309 residues: Protein FdhE homolog (309 aa).

It belongs to the FdhE family.

It localises to the cytoplasm. Its function is as follows. Necessary for formate dehydrogenase activity. The polypeptide is Protein FdhE homolog (Pseudomonas aeruginosa (strain ATCC 15692 / DSM 22644 / CIP 104116 / JCM 14847 / LMG 12228 / 1C / PRS 101 / PAO1)).